The primary structure comprises 468 residues: Tissue alpha-L-fucosidase (468 aa).

Residues 1–22 (MRSWVVGARLLLLLQLVLVLGA) form the signal peptide. At Thr173 the chain carries Phosphothreonine. N-linked (GlcNAc...) asparagine glycosylation is found at Asn244, Asn271, and Asn320.

Belongs to the glycosyl hydrolase 29 family. Homotetramer.

Its subcellular location is the lysosome. The catalysed reaction is an alpha-L-fucoside + H2O = L-fucose + an alcohol. It catalyses the reaction a neolactoside IV(2)-alpha-Fuc-nLc4Cer(d18:1(4E)) + H2O = a neolactoside nLc4Cer(d18:1(4E)) + L-fucose. It carries out the reaction a neolactoside IV(2)-alpha-Fuc-nLc4Cer(d18:0) + H2O = a neolactoside nLc4Cer(d18:0) + L-fucose. Functionally, alpha-L-fucosidase is responsible for hydrolyzing the alpha-1,6-linked fucose joined to the reducing-end N-acetylglucosamine of the carbohydrate moieties of glycoproteins. In Bos taurus (Bovine), this protein is Tissue alpha-L-fucosidase (FUCA1).